Consider the following 283-residue polypeptide: Putative ABC transporter ATP-binding protein MA_4342 (283 aa).

An ABC transporter domain is found at 3 to 238 (IILENVSFFY…KNVPLPPVTS (236 aa)). An ATP-binding site is contributed by 40-47 (GEKGAGKS).

Belongs to the ABC transporter superfamily.

Its subcellular location is the cell membrane. Functionally, probably part of an ABC transporter complex. Responsible for energy coupling to the transport system. In Methanosarcina acetivorans (strain ATCC 35395 / DSM 2834 / JCM 12185 / C2A), this protein is Putative ABC transporter ATP-binding protein MA_4342.